The primary structure comprises 285 residues: Probable nudix hydrolase C6G9.05 (285 aa).

In terms of domain architecture, Nudix hydrolase spans 114–254 (TRFASVLMPL…DLLYVEFNID (141 aa)). The Nudix box motif lies at 153-175 (GRVEPSDGSHYYAALRETYEEIG). Residues glutamate 169 and glutamate 173 each coordinate Mg(2+).

This sequence belongs to the Nudix hydrolase family. PCD1 subfamily. Requires Mn(2+) as cofactor. It depends on Mg(2+) as a cofactor.

Probably mediates the hydrolysis of some nucleoside diphosphate derivatives. This is Probable nudix hydrolase C6G9.05 from Schizosaccharomyces pombe (strain 972 / ATCC 24843) (Fission yeast).